Reading from the N-terminus, the 483-residue chain is Protein nucleotidyltransferase YdiU (483 aa).

Residues glycine 87, glycine 89, arginine 90, lysine 110, aspartate 122, glycine 123, arginine 173, and arginine 180 each contribute to the ATP site. Aspartate 249 acts as the Proton acceptor in catalysis. Mg(2+) contacts are provided by asparagine 250 and aspartate 259. ATP is bound at residue aspartate 259.

It belongs to the SELO family. Mg(2+) is required as a cofactor. Mn(2+) serves as cofactor.

It carries out the reaction L-seryl-[protein] + ATP = 3-O-(5'-adenylyl)-L-seryl-[protein] + diphosphate. The enzyme catalyses L-threonyl-[protein] + ATP = 3-O-(5'-adenylyl)-L-threonyl-[protein] + diphosphate. It catalyses the reaction L-tyrosyl-[protein] + ATP = O-(5'-adenylyl)-L-tyrosyl-[protein] + diphosphate. The catalysed reaction is L-histidyl-[protein] + UTP = N(tele)-(5'-uridylyl)-L-histidyl-[protein] + diphosphate. It carries out the reaction L-seryl-[protein] + UTP = O-(5'-uridylyl)-L-seryl-[protein] + diphosphate. The enzyme catalyses L-tyrosyl-[protein] + UTP = O-(5'-uridylyl)-L-tyrosyl-[protein] + diphosphate. In terms of biological role, nucleotidyltransferase involved in the post-translational modification of proteins. It can catalyze the addition of adenosine monophosphate (AMP) or uridine monophosphate (UMP) to a protein, resulting in modifications known as AMPylation and UMPylation. The chain is Protein nucleotidyltransferase YdiU from Pectobacterium carotovorum subsp. carotovorum (strain PC1).